The following is a 629-amino-acid chain: ATP-dependent DNA helicase II subunit 2 (629 aa).

A Ku domain is found at 254–476 (SGLNRKTAVE…GHQIDELMEQ (223 aa)). A compositionally biased stretch (basic and acidic residues) spans 608-620 (DLETLLKRGEQHS). The segment at 608-629 (DLETLLKRGEQHSRGSPNNSNN) is disordered.

It belongs to the ku80 family. Heterodimer of YKU70/HDF1 and YKU80/HDF2. Interacts with SIR4.

The protein resides in the nucleus. Its subcellular location is the chromosome. The protein localises to the telomere. The catalysed reaction is ATP + H2O = ADP + phosphate + H(+). Its function is as follows. Single-stranded DNA-dependent ATP-dependent helicase. Involved in non-homologous end joining (NHEJ) DNA double strand break repair. DNA-binding is sequence-independent but has a high affinity to nicks in double-stranded DNA and to the ends of duplex DNA. Binds to naturally occurring chromosomal ends, and therefore provides chromosomal end protection. Appears to have a role in recruitment of telomerase and CDC13 to the telomere and the subsequent telomere elongation. Required also for telomere recombination to repair telomeric ends in the absence of telomerase. KU70, of the KU70/KU80 heterodimer, binds to the stem loop of TLC1, the RNA component of telomerase. Involved in telomere maintenance. Interacts with telomeric repeats and subtelomeric sequences thereby controlling telomere length and protecting against subtelomeric rearrangement. Maintains telomeric chromatin, which is involved in silencing the expression of genes located at the telomere. Required for mating-type switching. In Saccharomyces cerevisiae (strain ATCC 204508 / S288c) (Baker's yeast), this protein is ATP-dependent DNA helicase II subunit 2 (YKU80).